A 1759-amino-acid chain; its full sequence is Collagen alpha-1(IV) chain (1759 aa).

Residues 1–20 form the signal peptide; the sequence is MSRLSLLGLTAAVVLLSSFC. Positions 21-194 are cleaved as a propeptide — N-terminal propeptide (7S domain); sequence QDRIHVDAAA…PGNSGYPGLK (174 aa). Disordered stretches follow at residues 51-245, 269-415, 548-596, 618-650, 666-720, and 787-1522; these read PGFG…GSYP, KGRD…GIDG, AGDP…PGLP, PAGI…GGPG, IDGK…RGIP, and RGQQ…GTPG. 3 stretches are compositionally biased toward low complexity: residues 104–116, 140–153, and 278–293; these read HPGL…LPGL, PPGQ…PGRP, and PGML…PGLK. The segment at 195–1530 is triple-helical region; that stretch reads GAKGDPGPYG…PGYPGSPGGW (1336 aa). 3 stretches are compositionally biased toward gly residues: residues 324–345, 360–370, and 379–388; these read GEQG…GEPG, GPLGEGTGEAG, and GVQGGKGLPG. Low complexity-rich tracts occupy residues 399–411 and 574–595; these read RGPV…PGQP and MPGA…SPGL. A compositionally biased stretch (low complexity) spans 833–848; it reads YPGPNGDAGAAGLPGP. Residues 904–913 are compositionally biased toward gly residues; that stretch reads GQDGGPGYSG. 4 stretches are compositionally biased toward low complexity: residues 1037-1047, 1219-1232, 1247-1271, and 1281-1309; these read YPGQPGDVGYP, ENGD…DGQP, PGRD…PGQD, and QDGY…YGMP. The segment covering 1310–1319 has biased composition (gly residues); it reads GLPGGPGESG. The segment covering 1341-1357 has biased composition (low complexity); sequence LPGAPGVPGVEGVPGLE. The segment covering 1410–1422 has biased composition (basic and acidic residues); that stretch reads PRGDDGFPGRDGL. Low complexity-rich tracts occupy residues 1423–1437 and 1472–1482; these read DGLP…LPGP and PPGKAGYPGAP. Residues 1495 to 1504 show a composition bias toward gly residues; the sequence is GMPGHGGDQG. Residues 1535–1759 form the Collagen IV NC1 domain; sequence GFTFAKHSQT…SRCQVCLKNR (225 aa). 6 disulfides stabilise this stretch: C1550–C1641, C1583–C1638, C1595–C1601, C1660–C1755, C1694–C1752, and C1706–C1712. Residue M1623 forms an S-Lysyl-methionine sulfilimine (Met-Lys) (interchain with K-1741) linkage. K1741 participates in a covalent cross-link: S-Lysyl-methionine sulfilimine (Lys-Met) (interchain with M-1623).

The protein belongs to the type IV collagen family. Trimers of two alpha 1(IV) and one alpha 2(IV) chain. Type IV collagen forms a mesh-like network linked through intermolecular interactions between 7S domains and between NC1 domains. Post-translationally, prolines at the third position of the tripeptide repeating unit (G-X-Y) are hydroxylated in some or all of the chains. Type IV collagens contain numerous cysteine residues which are involved in inter- and intramolecular disulfide bonding. 12 of these, located in the NC1 domain, are conserved in all known type IV collagens. In terms of processing, the trimeric structure of the NC1 domains is stabilized by covalent bonds between Lys and Met residues.

It is found in the secreted. The protein resides in the extracellular space. It localises to the extracellular matrix. The protein localises to the basement membrane. Functionally, collagen type IV is specific for basement membranes. Required to restrict presynaptic growth at the neuromuscular junctions (NMJ) in late larval stage and in adult motor neurons. May play a role in axon regeneration in embryos following injury in D-type motor neurons. The sequence is that of Collagen alpha-1(IV) chain from Caenorhabditis elegans.